A 160-amino-acid polypeptide reads, in one-letter code: Cytochrome b6-f complex subunit 4 (160 aa).

Transmembrane regions (helical) follow at residues 36-56, 95-115, and 131-151; these read LLYVFPVVILGTIACSIGLAI, LLGVLSMAAVPAGLLTVPFIE, and TIFLISTVITIWLGIGATMPI.

This sequence belongs to the cytochrome b family. PetD subfamily. As to quaternary structure, the 4 large subunits of the cytochrome b6-f complex are cytochrome b6, subunit IV (17 kDa polypeptide, petD), cytochrome f and the Rieske protein, while the 4 small subunits are petG, petL, petM and petN. The complex functions as a dimer.

The protein localises to the plastid. Its subcellular location is the chloroplast thylakoid membrane. In terms of biological role, component of the cytochrome b6-f complex, which mediates electron transfer between photosystem II (PSII) and photosystem I (PSI), cyclic electron flow around PSI, and state transitions. The sequence is that of Cytochrome b6-f complex subunit 4 from Porphyra purpurea (Red seaweed).